A 551-amino-acid chain; its full sequence is Solute carrier family 22 member 13 (551 aa).

Over 1 to 20 (MAQFVQVLAEIGDFGRFQIQ) the chain is Cytoplasmic. A helical transmembrane segment spans residues 21–41 (LLILLCVLNFLSPFYFFAHVF). Topologically, residues 42–138 (MVLDEPHHCA…LVCDRKHLKD (97 aa)) are extracellular. N-linked (GlcNAc...) asparagine glycans are attached at residues Asn57, Asn61, Asn92, and Asn104. A helical transmembrane segment spans residues 139 to 159 (TTQSVFMAGLLVGTLMFGPLC). The Cytoplasmic portion of the chain corresponds to 160 to 167 (DRIGRKAT). The helical transmembrane segment at 168 to 188 (ILAQLLLFTLIGLATAFVPSF) threads the bilayer. The Extracellular portion of the chain corresponds to 189 to 195 (ELYMALR). The helical transmembrane segment at 196–216 (FAVATAVAGLSFSNVTLLTEW) threads the bilayer. Residues 217 to 224 (VGPSWRTQ) lie on the Cytoplasmic side of the membrane. Residues 225–245 (AVVLAQCNFSLGQMVLAGLAY) form a helical membrane-spanning segment. The Extracellular segment spans residues 246–251 (GFRNWR). A helical transmembrane segment spans residues 252–272 (LLQITGTAPGLLLFFYFWALP). Residues 273-332 (ESARWLLTRGRMDEAIQLIQKAASVNRRKLSPELMNQLVPEKTGPSGNALDLFRHPQLRK) lie on the Cytoplasmic side of the membrane. Residues 333 to 353 (VTLIIFCVWFVDSLGYYGLSL) traverse the membrane as a helical segment. Gln354 is a topological domain (extracellular). The chain crosses the membrane as a helical span at residues 355-375 (VGDFGLDVYLTQLIFGAVEVP). Over 376 to 397 (ARCSSIFMMQRFGRKWSQLGTL) the chain is Cytoplasmic. The helical transmembrane segment at 398 to 418 (VLGGLMCIIIIFIPADLPVVV) threads the bilayer. The Extracellular portion of the chain corresponds to 419–427 (TMLAVVGKM). Residues 428–448 (ATAAAFTISYVYSAELFPTIL) traverse the membrane as a helical segment. At 449–452 (RQTG) the chain is on the cytoplasmic side. Residues 453–473 (MGLVGIFSRIGGILTPLVILL) form a helical membrane-spanning segment. Topologically, residues 474–478 (GEYHA) are extracellular. Residues 479–499 (ALPMLIYGSLPIVAGLLCTLL) traverse the membrane as a helical segment. The Cytoplasmic portion of the chain corresponds to 500–551 (PETHGQGLKDTLQDLELGPHPRSPKSVPSEKETEAKGRTSSPGVAFVSSTYF). Residues 511–551 (LQDLELGPHPRSPKSVPSEKETEAKGRTSSPGVAFVSSTYF) are disordered. Residues 527 to 536 (PSEKETEAKG) are compositionally biased toward basic and acidic residues. Positions 537-551 (RTSSPGVAFVSSTYF) are enriched in polar residues.

This sequence belongs to the major facilitator (TC 2.A.1) superfamily. Organic cation transporter (TC 2.A.1.19) family. Glycosylated. As to expression, ubiquitous. Highly expressed in kidneys and to a weaker extent in brain, heart, and intestine. In kidneys, expressed in proximal convoluted tubule. In kidneys, also expressed in cortical collecting duct, whereas glomerulus and thick ascending limb exhibit no expression.

It localises to the apical cell membrane. The enzyme catalyses urate(out) + (S)-lactate(in) = urate(in) + (S)-lactate(out). It catalyses the reaction urate(out) + succinate(in) = urate(in) + succinate(out). The catalysed reaction is urate(out) + glutathione(in) = urate(in) + glutathione(out). It carries out the reaction nicotinate(in) + urate(out) = nicotinate(out) + urate(in). The enzyme catalyses orotate(out) + a carboxylate(in) = orotate(in) + a carboxylate(out). In terms of biological role, anion antiporter that mediates the transport of urate, orotate and nicotinate in exchange for organic or inorganic anions. Translocates urate and orotate across the apical membrane of proximal tubule epithelial cells and involved in urate renal reabsorption. Possibly involved in orotate renal reabsorption and nicotinate intestinal reabsorption. Mediates urate uptake by an exchange with organic anions such as (S)-lactate, succinate, glutathione and nicotinate. Urate and orotate transports are Cl(-)-dependent. Shows similar transport characteristics as the urate/orotate renal antiporter SLC22A12/URAT1 and may act as a compensator of SLC22A12/URAT1 in certain conditions. The chain is Solute carrier family 22 member 13 from Homo sapiens (Human).